The sequence spans 227 residues: Cytochrome c oxidase subunit 2 (227 aa).

Residue methionine 1 is modified to N-formylmethionine. The Mitochondrial intermembrane portion of the chain corresponds to 1–14; the sequence is MAYPMQLGFQDATS. Residues 15–45 form a helical membrane-spanning segment; sequence PIMEELLHFHDHTLMIVFLISSLVLYIISLM. Residues 46 to 59 are Mitochondrial matrix-facing; sequence LTTKLTHTSTMDAQ. Residues 60–87 form a helical membrane-spanning segment; it reads EVETIWTILPAIILILIALPSLRILYMM. Residues 88-227 are Mitochondrial intermembrane-facing; the sequence is DEINNPSLTV…YFEKWSASML (140 aa). 6 residues coordinate Cu cation: histidine 161, cysteine 196, glutamate 198, cysteine 200, histidine 204, and methionine 207. Glutamate 198 contributes to the Mg(2+) binding site. Tyrosine 218 bears the Phosphotyrosine mark.

The protein belongs to the cytochrome c oxidase subunit 2 family. In terms of assembly, component of the cytochrome c oxidase (complex IV, CIV), a multisubunit enzyme composed of 14 subunits. The complex is composed of a catalytic core of 3 subunits MT-CO1, MT-CO2 and MT-CO3, encoded in the mitochondrial DNA, and 11 supernumerary subunits COX4I, COX5A, COX5B, COX6A, COX6B, COX6C, COX7A, COX7B, COX7C, COX8 and NDUFA4, which are encoded in the nuclear genome. The complex exists as a monomer or a dimer and forms supercomplexes (SCs) in the inner mitochondrial membrane with NADH-ubiquinone oxidoreductase (complex I, CI) and ubiquinol-cytochrome c oxidoreductase (cytochrome b-c1 complex, complex III, CIII), resulting in different assemblies (supercomplex SCI(1)III(2)IV(1) and megacomplex MCI(2)III(2)IV(2)). Found in a complex with TMEM177, COA6, COX18, COX20, SCO1 and SCO2. Interacts with TMEM177 in a COX20-dependent manner. Interacts with COX20. Interacts with COX16. Cu cation serves as cofactor.

It is found in the mitochondrion inner membrane. The catalysed reaction is 4 Fe(II)-[cytochrome c] + O2 + 8 H(+)(in) = 4 Fe(III)-[cytochrome c] + 2 H2O + 4 H(+)(out). Functionally, component of the cytochrome c oxidase, the last enzyme in the mitochondrial electron transport chain which drives oxidative phosphorylation. The respiratory chain contains 3 multisubunit complexes succinate dehydrogenase (complex II, CII), ubiquinol-cytochrome c oxidoreductase (cytochrome b-c1 complex, complex III, CIII) and cytochrome c oxidase (complex IV, CIV), that cooperate to transfer electrons derived from NADH and succinate to molecular oxygen, creating an electrochemical gradient over the inner membrane that drives transmembrane transport and the ATP synthase. Cytochrome c oxidase is the component of the respiratory chain that catalyzes the reduction of oxygen to water. Electrons originating from reduced cytochrome c in the intermembrane space (IMS) are transferred via the dinuclear copper A center (CU(A)) of subunit 2 and heme A of subunit 1 to the active site in subunit 1, a binuclear center (BNC) formed by heme A3 and copper B (CU(B)). The BNC reduces molecular oxygen to 2 water molecules using 4 electrons from cytochrome c in the IMS and 4 protons from the mitochondrial matrix. This Bos indicus (Zebu) protein is Cytochrome c oxidase subunit 2 (MT-CO2).